Here is a 207-residue protein sequence, read N- to C-terminus: 3-demethoxyubiquinol 3-hydroxylase (207 aa).

Residues Glu56, Glu86, His89, Glu138, Glu170, and His173 each coordinate Fe cation.

It belongs to the COQ7 family. Fe cation serves as cofactor.

The protein localises to the cell membrane. The enzyme catalyses a 5-methoxy-2-methyl-3-(all-trans-polyprenyl)benzene-1,4-diol + AH2 + O2 = a 3-demethylubiquinol + A + H2O. It functions in the pathway cofactor biosynthesis; ubiquinone biosynthesis. Functionally, catalyzes the hydroxylation of 2-nonaprenyl-3-methyl-6-methoxy-1,4-benzoquinol during ubiquinone biosynthesis. In Cupriavidus taiwanensis (strain DSM 17343 / BCRC 17206 / CCUG 44338 / CIP 107171 / LMG 19424 / R1) (Ralstonia taiwanensis (strain LMG 19424)), this protein is 3-demethoxyubiquinol 3-hydroxylase.